Consider the following 419-residue polypeptide: 26S proteasome regulatory subunit 8 homolog B (419 aa).

202–209 (GPPGTGKT) contacts ATP. A Glycyl lysine isopeptide (Lys-Gly) (interchain with G-Cter in ubiquitin) cross-link involves residue Lys-406.

Belongs to the AAA ATPase family. In terms of assembly, component of the 19S regulatory particle (RP/PA700) base subcomplex of the 26S proteasome. The 26S proteasome is composed of a core protease (CP), known as the 20S proteasome, capped at one or both ends by the 19S regulatory particle (RP/PA700). The RP/PA700 complex is composed of at least 17 different subunits in two subcomplexes, the base and the lid, which form the portions proximal and distal to the 20S proteolytic core, respectively.

It is found in the cytoplasm. The protein resides in the nucleus. Functionally, the 26S proteasome is involved in the ATP-dependent degradation of ubiquitinated proteins. The regulatory (or ATPase) complex confers ATP dependency and substrate specificity to the 26S complex. The protein is 26S proteasome regulatory subunit 8 homolog B (RPT6B) of Arabidopsis thaliana (Mouse-ear cress).